Consider the following 232-residue polypeptide: MSISNSIRAQIPPIHPEGYPFIGAFALVSLILFWIFAPLGWIGTLLTVWCALFFRDPIRVTPQREGLVVAPADGRISMITRALPPAELGLGDRPLLRVSIFMSVFNVHVNRSPVAGRIEKIAYRPGAFINAELDKASEDNERNSLAISTPHGKIGVVQIAGLVARRIVSFVREGQTVGAGERFGLIRFGSRLDVYFPDGTEVLVSEGQTAIAGETVLADFDVAVPGLTFRSQ.

The active-site Schiff-base intermediate with substrate; via pyruvic acid is Ser190. Ser190 is modified (pyruvic acid (Ser); by autocatalysis).

Belongs to the phosphatidylserine decarboxylase family. PSD-A subfamily. In terms of assembly, heterodimer of a large membrane-associated beta subunit and a small pyruvoyl-containing alpha subunit. Pyruvate is required as a cofactor. Is synthesized initially as an inactive proenzyme. Formation of the active enzyme involves a self-maturation process in which the active site pyruvoyl group is generated from an internal serine residue via an autocatalytic post-translational modification. Two non-identical subunits are generated from the proenzyme in this reaction, and the pyruvate is formed at the N-terminus of the alpha chain, which is derived from the carboxyl end of the proenzyme. The post-translation cleavage follows an unusual pathway, termed non-hydrolytic serinolysis, in which the side chain hydroxyl group of the serine supplies its oxygen atom to form the C-terminus of the beta chain, while the remainder of the serine residue undergoes an oxidative deamination to produce ammonia and the pyruvoyl prosthetic group on the alpha chain.

The protein localises to the cell membrane. It carries out the reaction a 1,2-diacyl-sn-glycero-3-phospho-L-serine + H(+) = a 1,2-diacyl-sn-glycero-3-phosphoethanolamine + CO2. It participates in phospholipid metabolism; phosphatidylethanolamine biosynthesis; phosphatidylethanolamine from CDP-diacylglycerol: step 2/2. In terms of biological role, catalyzes the formation of phosphatidylethanolamine (PtdEtn) from phosphatidylserine (PtdSer). This chain is Phosphatidylserine decarboxylase proenzyme, found in Bradyrhizobium sp. (strain ORS 278).